A 122-amino-acid chain; its full sequence is Prefoldin subunit 1 (122 aa).

Ala-2 carries the post-translational modification N-acetylalanine.

The protein belongs to the prefoldin subunit beta family. As to quaternary structure, heterohexamer of two PFD-alpha type and four PFD-beta type subunits.

Binds specifically to cytosolic chaperonin (c-CPN) and transfers target proteins to it. Binds to nascent polypeptide chain and promotes folding in an environment in which there are many competing pathways for nonnative proteins. This Mus musculus (Mouse) protein is Prefoldin subunit 1 (Pfdn1).